Reading from the N-terminus, the 221-residue chain is C-8 sterol isomerase (221 aa).

The chain crosses the membrane as a helical span at residues 5–25 (ISGFLRFVAVLLAVVSPLVYL).

Belongs to the ERG2 family.

It is found in the endoplasmic reticulum membrane. It participates in steroid metabolism; ergosterol biosynthesis; ergosterol from zymosterol: step 2/5. Its function is as follows. Catalyzes the reaction which results in unsaturation at C-7 in the B ring of sterols. The polypeptide is C-8 sterol isomerase (ERG2) (Pyricularia oryzae (strain 70-15 / ATCC MYA-4617 / FGSC 8958) (Rice blast fungus)).